The primary structure comprises 406 residues: MSVLSGLASEPRTPLSSKARMKRLPRKSQNEKYRLKYLRLRRAAKATVFENASICDEIARLEEKFLKAKEERRYLLKKLLQIHALTEGEPQAAAPSHSSSLPLPYGVTSSVGTMQGAGPSTGAEEPFAKKSKKEKKEKGKENSKLEVLKKTSKKKKMEGGARKLVRPIALDPSGQPVFPIGLGGLTVYSLGEIITNRPGFHDENAIYPVGYCSTRVYASMKCPDQKCLYTCQIKDGGVQPQFEIVPEDDPQNTIVGSSADACYEELLRAISATTGKLMPNPLSCGADFFGFSHPTIHNLIQSCPEAQNCVNYQWVKFDACKPRKGQLSQELPENDATMSLEAFQTQTFDDDHDDSILPGSLDLPELQHEAFVSSYQPEFLTHEPLVDTDLQHLKSPSQCSPIQSSD.

2 disordered regions span residues 1–28 (MSVL…PRKS) and 109–144 (SSVG…ENSK). An N-acetylserine modification is found at S2. The residue at position 13 (T13) is a Phosphothreonine. Basic and acidic residues predominate over residues 134-144 (EKKEKGKENSK). Residues 177 to 236 (VFPIGLGGLTVYSLGEIITNRPGFHDENAIYPVGYCSTRVYASMKCPDQKCLYTCQIKDG) form the FYR N-terminal domain. The 80-residue stretch at 237–316 (GVQPQFEIVP…QNCVNYQWVK (80 aa)) folds into the FYR C-terminal domain.

Belongs to the TBRG1 family. As to quaternary structure, interacts with CDKN2A and MDM2. In terms of processing, ubiquitinated; mediated by MDM2 and leading to its subsequent proteasomal degradation.

Its subcellular location is the nucleus. In terms of biological role, acts as a growth inhibitor. Can activate p53/TP53, causes G1 arrest and collaborates with CDKN2A to restrict proliferation, but does not require either protein to inhibit DNA synthesis. Redistributes CDKN2A into the nucleoplasm. Involved in maintaining chromosomal stability. The polypeptide is Transforming growth factor beta regulator 1 (Tbrg1) (Mus musculus (Mouse)).